Here is a 577-residue protein sequence, read N- to C-terminus: Jasmonoyl--L-amino acid synthetase JAR4 (577 aa).

Ser-99 lines the ATP pocket. Ser-102 contributes to the jasmonate binding site. ATP contacts are provided by residues Met-119, Thr-122, Gly-163, Asn-168, and 331-336 (GSSEGW). An an L-alpha-amino acid-binding site is contributed by 166-170 (TTNVY). 328-331 (ADYG) is a jasmonate binding site. Residue 531-535 (KILDH) participates in an L-alpha-amino acid binding.

It belongs to the IAA-amido conjugating enzyme family.

It carries out the reaction a jasmonate + an L-alpha-amino acid + ATP = a jasmonyl-L-amino acid + AMP + diphosphate + H(+). In terms of biological role, catalyzes the synthesis of jasmonate-amino acid conjugates by adenylation. Catalyzes the conjugation of jasmonate (JA) to Ile, Leu and Val. Catalyzes the conjugation of jasmonate (JA) to Ile to mediate defense signaling and resistance to the herbivore Manduca sexta caterpillars. The polypeptide is Jasmonoyl--L-amino acid synthetase JAR4 (Nicotiana attenuata (Coyote tobacco)).